The chain runs to 128 residues: Large ribosomal subunit protein bL17 (128 aa).

The protein belongs to the bacterial ribosomal protein bL17 family. Part of the 50S ribosomal subunit. Contacts protein L32.

The polypeptide is Large ribosomal subunit protein bL17 (Tolumonas auensis (strain DSM 9187 / NBRC 110442 / TA 4)).